The following is an 87-amino-acid chain: Acyl-CoA-binding protein (87 aa).

Ser-2 carries the post-translational modification N-acetylserine. One can recognise an ACB domain in the interval 2–87; the sequence is SQAEFDKAAE…VEDLKKKYGI (86 aa). Residue Lys-8 is modified to N6-acetyllysine; alternate. Lys-8 is modified (N6-succinyllysine; alternate). Lys-14 is an an acyl-CoA binding site. Lys-17 bears the N6-succinyllysine mark. Lys-19 bears the N6-acetyllysine mark. Tyr-29 bears the Phosphotyrosine mark. Residues 29–33, Lys-55, and Tyr-74 contribute to the an acyl-CoA site; that span reads YSHYK. Lys-55 is subject to N6-acetyllysine; alternate. Residue Lys-55 is modified to N6-succinyllysine; alternate. An N6-(2-hydroxyisobutyryl)lysine; alternate modification is found at Lys-55. At Lys-55 the chain carries N6-malonyllysine; alternate. The residue at position 77 (Lys-77) is an N6-acetyllysine; alternate. Lys-77 carries the N6-succinyllysine; alternate modification.

This sequence belongs to the ACBP family. In terms of assembly, monomer.

Its subcellular location is the endoplasmic reticulum. It is found in the golgi apparatus. Functionally, binds medium- and long-chain acyl-CoA esters with very high affinity and may function as an intracellular carrier of acyl-CoA esters. This chain is Acyl-CoA-binding protein (DBI), found in Canis lupus familiaris (Dog).